The sequence spans 104 residues: MMRGMGNMQGMMKQVQKMQKEMAKAQEALNEKEFIGEATNQLVTATFTGDRTMKDLIIKEDVVDPEDVDMLQDLVIMAVNDALVKIEKETEATLGKYTKGMPGF.

The protein belongs to the YbaB/EbfC family. In terms of assembly, homodimer.

It is found in the cytoplasm. The protein localises to the nucleoid. Functionally, binds to DNA and alters its conformation. May be involved in regulation of gene expression, nucleoid organization and DNA protection. This Enterococcus faecalis (strain ATCC 700802 / V583) protein is Nucleoid-associated protein EF_2780.